The following is a 519-amino-acid chain: Acetylcholine receptor subunit gamma (519 aa).

Positions 1–22 are cleaved as a signal peptide; the sequence is MHGGQGPQLLLLLLATCLGAQS. Topologically, residues 23 to 240 are extracellular; the sequence is RNQEERLLAD…VVFYLLIQRK (218 aa). N-linked (GlcNAc...) asparagine glycosylation is found at asparagine 52 and asparagine 163. A disulfide bridge links cysteine 150 with cysteine 164. 3 helical membrane-spanning segments follow: residues 241–265, 274–292, and 308–329; these read PLFYVINIIVPCVLISSVAILIYFL, CTVATNVLLAQTVFLFLVA, and YLTFLMVVTILIVVNSVVVLNV. At 330-476 the chain is on the cytoplasmic side; it reads SLRSPHTHSM…WLLVGRVLDR (147 aa). A helical membrane pass occupies residues 477-497; that stretch reads VCFLAMLSLFICGTAGIFLMA.

It belongs to the ligand-gated ion channel (TC 1.A.9) family. Acetylcholine receptor (TC 1.A.9.1) subfamily. Gamma/CHRNG sub-subfamily. As to quaternary structure, pentamer of two alpha chains, and one each of the beta, delta, and gamma (in immature muscle) or epsilon (in mature muscle) chains.

The protein resides in the postsynaptic cell membrane. It is found in the cell membrane. It catalyses the reaction K(+)(in) = K(+)(out). The catalysed reaction is Na(+)(in) = Na(+)(out). After binding acetylcholine, the AChR responds by an extensive change in conformation that affects all subunits and leads to opening of an ion-conducting channel across the plasma membrane. In Rattus norvegicus (Rat), this protein is Acetylcholine receptor subunit gamma (Chrng).